A 1391-amino-acid polypeptide reads, in one-letter code: DNA-directed RNA polymerase subunit beta' (1391 aa).

Residues cysteine 72, cysteine 74, cysteine 87, and cysteine 90 each coordinate Zn(2+). 3 residues coordinate Mg(2+): aspartate 462, aspartate 464, and aspartate 466. Zn(2+) contacts are provided by cysteine 816, cysteine 890, cysteine 897, and cysteine 900.

Belongs to the RNA polymerase beta' chain family. As to quaternary structure, the RNAP catalytic core consists of 2 alpha, 1 beta, 1 beta' and 1 omega subunit. When a sigma factor is associated with the core the holoenzyme is formed, which can initiate transcription. The cofactor is Mg(2+). Requires Zn(2+) as cofactor.

The catalysed reaction is RNA(n) + a ribonucleoside 5'-triphosphate = RNA(n+1) + diphosphate. In terms of biological role, DNA-dependent RNA polymerase catalyzes the transcription of DNA into RNA using the four ribonucleoside triphosphates as substrates. This Neisseria meningitidis serogroup A / serotype 4A (strain DSM 15465 / Z2491) protein is DNA-directed RNA polymerase subunit beta'.